The sequence spans 62 residues: Photosystem II reaction center protein Z (62 aa).

The next 2 membrane-spanning stretches (helical) occupy residues 8–28 (AVFA…VVFA) and 41–61 (FSGT…NSLI).

This sequence belongs to the PsbZ family. PSII is composed of 1 copy each of membrane proteins PsbA, PsbB, PsbC, PsbD, PsbE, PsbF, PsbH, PsbI, PsbJ, PsbK, PsbL, PsbM, PsbT, PsbY, PsbZ, Psb30/Ycf12, at least 3 peripheral proteins of the oxygen-evolving complex and a large number of cofactors. It forms dimeric complexes.

The protein resides in the plastid. The protein localises to the chloroplast thylakoid membrane. Functionally, may control the interaction of photosystem II (PSII) cores with the light-harvesting antenna, regulates electron flow through the 2 photosystem reaction centers. PSII is a light-driven water plastoquinone oxidoreductase, using light energy to abstract electrons from H(2)O, generating a proton gradient subsequently used for ATP formation. This chain is Photosystem II reaction center protein Z, found in Gossypium barbadense (Sea Island cotton).